The following is a 289-amino-acid chain: ATP phosphoribosyltransferase (289 aa).

The protein belongs to the ATP phosphoribosyltransferase family. Long subfamily. The cofactor is Mg(2+).

The protein resides in the cytoplasm. The catalysed reaction is 1-(5-phospho-beta-D-ribosyl)-ATP + diphosphate = 5-phospho-alpha-D-ribose 1-diphosphate + ATP. Its pathway is amino-acid biosynthesis; L-histidine biosynthesis; L-histidine from 5-phospho-alpha-D-ribose 1-diphosphate: step 1/9. Its activity is regulated as follows. Feedback inhibited by histidine. In terms of biological role, catalyzes the condensation of ATP and 5-phosphoribose 1-diphosphate to form N'-(5'-phosphoribosyl)-ATP (PR-ATP). Has a crucial role in the pathway because the rate of histidine biosynthesis seems to be controlled primarily by regulation of HisG enzymatic activity. This chain is ATP phosphoribosyltransferase, found in Methanosarcina acetivorans (strain ATCC 35395 / DSM 2834 / JCM 12185 / C2A).